The primary structure comprises 486 residues: Glutamyl-tRNA(Gln) amidotransferase subunit A (486 aa).

Catalysis depends on charge relay system residues lysine 76 and serine 151. Serine 175 acts as the Acyl-ester intermediate in catalysis.

It belongs to the amidase family. GatA subfamily. Heterotrimer of A, B and C subunits.

The enzyme catalyses L-glutamyl-tRNA(Gln) + L-glutamine + ATP + H2O = L-glutaminyl-tRNA(Gln) + L-glutamate + ADP + phosphate + H(+). Allows the formation of correctly charged Gln-tRNA(Gln) through the transamidation of misacylated Glu-tRNA(Gln) in organisms which lack glutaminyl-tRNA synthetase. The reaction takes place in the presence of glutamine and ATP through an activated gamma-phospho-Glu-tRNA(Gln). The sequence is that of Glutamyl-tRNA(Gln) amidotransferase subunit A from Chromohalobacter salexigens (strain ATCC BAA-138 / DSM 3043 / CIP 106854 / NCIMB 13768 / 1H11).